We begin with the raw amino-acid sequence, 769 residues long: Phosphatidylinositol 4-phosphate 5-kinase 8 (769 aa).

MORN repeat units lie at residues 16–38, 39–61, 62–84, 85–107, 108–130, 131–153, 154–176, and 177–198; these read YSGQ…DGII, YEGD…SGAK, YEGD…DGSV, YAGA…NSDV, YDGS…NGNR, FIGN…NGDL, FNGF…DGGF, and YFGT…AGSK. The disordered stretch occupies residues 266-289; the sequence is PPRDFMHHGPSSKSARSVDSGQSE. Polar residues predominate over residues 276 to 288; sequence SSKSARSVDSGQS. Positions 344–765 constitute a PIPK domain; the sequence is WNHYLMLNLQ…RFIDFLLKVF (422 aa). The interval 725–746 is activation loop; the sequence is YNMKKKVEHTCKSMKYDPMTIS.

The enzyme catalyses a 1,2-diacyl-sn-glycero-3-phospho-(1D-myo-inositol 4-phosphate) + ATP = a 1,2-diacyl-sn-glycero-3-phospho-(1D-myo-inositol-4,5-bisphosphate) + ADP + H(+). The chain is Phosphatidylinositol 4-phosphate 5-kinase 8 (PIP5K8) from Arabidopsis thaliana (Mouse-ear cress).